A 242-amino-acid chain; its full sequence is Probable septum site-determining protein MinC (242 aa).

Belongs to the MinC family. In terms of assembly, interacts with MinD and FtsZ.

Cell division inhibitor that blocks the formation of polar Z ring septums. Rapidly oscillates between the poles of the cell to destabilize FtsZ filaments that have formed before they mature into polar Z rings. Prevents FtsZ polymerization. The protein is Probable septum site-determining protein MinC of Brucella anthropi (strain ATCC 49188 / DSM 6882 / CCUG 24695 / JCM 21032 / LMG 3331 / NBRC 15819 / NCTC 12168 / Alc 37) (Ochrobactrum anthropi).